Here is a 704-residue protein sequence, read N- to C-terminus: UvrABC system protein B (704 aa).

A Helicase ATP-binding domain is found at 35 to 188; that stretch reads ERINNGEKDV…DDLLRKFVSM (154 aa). 48–55 is an ATP binding site; sequence GATGTGKS. The short motif at 101–124 is the Beta-hairpin element; that stretch reads YYDYYQPEAYVAQTDTFIEKDSSI. A Helicase C-terminal domain is found at 438–604; it reads QIDDLLGEIR…PLRKKIADIT (167 aa). Residues 659 to 694 enclose the UVR domain; that stretch reads VGMIAQLTEQMHGAAAELQFEVAARIRDEVSELKKE.

It belongs to the UvrB family. As to quaternary structure, forms a heterotetramer with UvrA during the search for lesions. Interacts with UvrC in an incision complex.

Its subcellular location is the cytoplasm. Its function is as follows. The UvrABC repair system catalyzes the recognition and processing of DNA lesions. A damage recognition complex composed of 2 UvrA and 2 UvrB subunits scans DNA for abnormalities. Upon binding of the UvrA(2)B(2) complex to a putative damaged site, the DNA wraps around one UvrB monomer. DNA wrap is dependent on ATP binding by UvrB and probably causes local melting of the DNA helix, facilitating insertion of UvrB beta-hairpin between the DNA strands. Then UvrB probes one DNA strand for the presence of a lesion. If a lesion is found the UvrA subunits dissociate and the UvrB-DNA preincision complex is formed. This complex is subsequently bound by UvrC and the second UvrB is released. If no lesion is found, the DNA wraps around the other UvrB subunit that will check the other stand for damage. The polypeptide is UvrABC system protein B (Pseudarthrobacter chlorophenolicus (strain ATCC 700700 / DSM 12829 / CIP 107037 / JCM 12360 / KCTC 9906 / NCIMB 13794 / A6) (Arthrobacter chlorophenolicus)).